The following is a 423-amino-acid chain: Gamma-glutamyl phosphate reductase (423 aa).

The protein belongs to the gamma-glutamyl phosphate reductase family.

The protein resides in the cytoplasm. It catalyses the reaction L-glutamate 5-semialdehyde + phosphate + NADP(+) = L-glutamyl 5-phosphate + NADPH + H(+). It participates in amino-acid biosynthesis; L-proline biosynthesis; L-glutamate 5-semialdehyde from L-glutamate: step 2/2. Its function is as follows. Catalyzes the NADPH-dependent reduction of L-glutamate 5-phosphate into L-glutamate 5-semialdehyde and phosphate. The product spontaneously undergoes cyclization to form 1-pyrroline-5-carboxylate. The polypeptide is Gamma-glutamyl phosphate reductase (Roseiflexus castenholzii (strain DSM 13941 / HLO8)).